Here is a 244-residue protein sequence, read N- to C-terminus: Adiponectin (244 aa).

The N-terminal stretch at 1–18 (MLLLGAVLLLLALPGHDQ) is a signal peptide. 2 O-linked (GalNAc...) threonine glycosylation sites follow: threonine 21 and threonine 22. Residue lysine 33 is modified to 5-hydroxylysine. At cysteine 36 the chain carries S-(2-succinyl)cysteine. The segment at 40–101 (MAGIPGHPGH…RGFPGIQGRK (62 aa)) is disordered. In terms of domain architecture, Collagen-like spans 42–107 (GIPGHPGHNG…QGRKGEPGEG (66 aa)). Proline 44, proline 47, and proline 53 each carry 4-hydroxyproline. A compositionally biased stretch (basic and acidic residues) spans 55 to 70 (RDGRDGTPGEKGEKGD). 5-hydroxylysine occurs at positions 65 and 68. 2 O-linked (Gal...) hydroxylysine; partial glycosylation sites follow: lysine 65 and lysine 68. 4-hydroxyproline; partial is present on residues proline 71 and proline 76. Lysine 77 bears the 5-hydroxylysine mark. O-linked (Gal...) hydroxylysine; partial glycosylation occurs at lysine 77. Residue proline 91 is modified to 4-hydroxyproline. At proline 95 the chain carries 4-hydroxyproline; partial. The residue at position 101 (lysine 101) is a 5-hydroxylysine. A glycan (O-linked (Gal...) hydroxylysine; partial) is linked at lysine 101. Positions 108 to 244 (AYVYRSAFSV…TGFLLYHDTN (137 aa)) constitute a C1q domain.

In terms of assembly, homomultimer. Forms trimers, hexamers and 12- to 18-mers. The trimers (low molecular weight complexes / LMW) are assembled via non-covalent interactions of the collagen-like domains in a triple helix and hydrophobic interactions within the globular C1q domain. Several trimers can associate to form disulfide-linked hexamers (middle molecular weight complexes / MMW) and larger complexes (higher molecular weight / HMW). The HMW-complex assembly is also modulated by the degree of lysine hydroxylation and glycosylation. LMW, MMW and HMW complexes bind to HBEGF, MMW and HMW complexes bind to PDGFB, and HMW complex binds to FGF2. Interacts with CTRP9 via the C1q domain (heterotrimeric complex). HMW complexes are more extensively glycosylated than smaller oligomers. Hydroxylation and glycosylation of the lysine residues within the collagen-like domain of adiponectin seem to be critically involved in regulating the formation and/or secretion of HMW complexes and consequently contribute to the insulin-sensitizing activity of adiponectin in hepatocytes. Post-translationally, O-glycosylated. Not N-glycosylated. O-linked glycans on hydroxylysines consist of Glc-Gal disaccharides bound to the oxygen atom of post-translationally added hydroxyl groups. Sialylated to varying degrees depending on tissue. Thr-22 appears to be the major site of sialylation. Higher sialylation found in SGBS adipocytes than in HEK fibroblasts. Sialylation is not required neither for heterodimerization nor for secretion. Not sialylated on the glycosylated hydroxylysines. Desialylated forms are rapidly cleared from the circulation. In terms of processing, succination of Cys-36 by the Krebs cycle intermediate fumarate, which leads to S-(2-succinyl)cysteine residues, inhibits polymerization and secretion of adiponectin. Adiponectin is a major target for succination in both adipocytes and adipose tissue of diabetic mammals. It was proposed that succination of proteins is a biomarker of mitochondrial stress and accumulation of Krebs cycle intermediates in adipose tissue in diabetes and that succination of adiponectin may contribute to the decrease in plasma adiponectin in diabetes. As to expression, synthesized exclusively by adipocytes and secreted into plasma.

The protein localises to the secreted. Its activity is regulated as follows. Polymerization and secretion of adiponectin is inhibited by succination of cysteine residues by the Krebs cycle intermediate fumarate, which leads to S-(2-succinyl)cysteine residues. In terms of biological role, important adipokine involved in the control of fat metabolism and insulin sensitivity, with direct anti-diabetic, anti-atherogenic and anti-inflammatory activities. Stimulates AMPK phosphorylation and activation in the liver and the skeletal muscle, enhancing glucose utilization and fatty-acid combustion. Antagonizes TNF-alpha by negatively regulating its expression in various tissues such as liver and macrophages, and also by counteracting its effects. Inhibits endothelial NF-kappa-B signaling through a cAMP-dependent pathway. May play a role in cell growth, angiogenesis and tissue remodeling by binding and sequestering various growth factors with distinct binding affinities, depending on the type of complex, LMW, MMW or HMW. In Homo sapiens (Human), this protein is Adiponectin (ADIPOQ).